A 705-amino-acid chain; its full sequence is CAP-Gly domain-containing linker protein 4 (705 aa).

ANK repeat units lie at residues 65 to 101 (TSVS…NVND), 149 to 180 (TNMN…DVDA), and 186 to 215 (NFGT…NPAF). One can recognise a CAP-Gly 1 domain in the interval 303-345 (GTTEFASGQWAGIELDEPEGKNNGSVGKVQYFKCAPKYGIFAP). 2 disordered regions span residues 391–410 (MTSK…PGEE) and 431–479 (TSSL…ANNS). The span at 441 to 452 (PKKQNAISSNKK) shows a compositional bias: polar residues. The segment covering 455–479 (SKSPSLSSRASAGLNSSATSTANNS) has biased composition (low complexity). The CAP-Gly 2 domain occupies 505 to 547 (GTTNFAPGYWYGIELEKPHGKNDGSVGGVQYFSCSPRYGIFAP). Phosphoserine occurs at positions 557 and 609. Residues 644–686 (GPTDFASGIWLGLELRSAKGKNDGSVGDKRYFTCKPNHGVLVR) form the CAP-Gly 3 domain.

This chain is CAP-Gly domain-containing linker protein 4 (CLIP4), found in Homo sapiens (Human).